A 365-amino-acid chain; its full sequence is UDP-N-acetylglucosamine--N-acetylmuramyl-(pentapeptide) pyrophosphoryl-undecaprenol N-acetylglucosamine transferase (365 aa).

Residues 10–12 (TGG), Asn-128, Arg-170, Ser-199, Ile-250, and Gln-295 each bind UDP-N-acetyl-alpha-D-glucosamine.

This sequence belongs to the glycosyltransferase 28 family. MurG subfamily.

The protein resides in the cell inner membrane. It catalyses the reaction di-trans,octa-cis-undecaprenyl diphospho-N-acetyl-alpha-D-muramoyl-L-alanyl-D-glutamyl-meso-2,6-diaminopimeloyl-D-alanyl-D-alanine + UDP-N-acetyl-alpha-D-glucosamine = di-trans,octa-cis-undecaprenyl diphospho-[N-acetyl-alpha-D-glucosaminyl-(1-&gt;4)]-N-acetyl-alpha-D-muramoyl-L-alanyl-D-glutamyl-meso-2,6-diaminopimeloyl-D-alanyl-D-alanine + UDP + H(+). It participates in cell wall biogenesis; peptidoglycan biosynthesis. Its function is as follows. Cell wall formation. Catalyzes the transfer of a GlcNAc subunit on undecaprenyl-pyrophosphoryl-MurNAc-pentapeptide (lipid intermediate I) to form undecaprenyl-pyrophosphoryl-MurNAc-(pentapeptide)GlcNAc (lipid intermediate II). The protein is UDP-N-acetylglucosamine--N-acetylmuramyl-(pentapeptide) pyrophosphoryl-undecaprenol N-acetylglucosamine transferase of Pelodictyon phaeoclathratiforme (strain DSM 5477 / BU-1).